The chain runs to 338 residues: Ketol-acid reductoisomerase (NADP(+)) (338 aa).

Positions 1–181 (MKVYYDKDAD…GGTKGGVIET (181 aa)) constitute a KARI N-terminal Rossmann domain. Residues 24-27 (YGSQ), R47, and S52 contribute to the NADP(+) site. The active site involves H107. G133 contributes to the NADP(+) binding site. The KARI C-terminal knotted domain maps to 182–327 (NFREETETDL…GQLRDMMPWI (146 aa)). The Mg(2+) site is built by D190, E194, E226, and E230. S251 is a binding site for substrate.

The protein belongs to the ketol-acid reductoisomerase family. Requires Mg(2+) as cofactor.

It carries out the reaction (2R)-2,3-dihydroxy-3-methylbutanoate + NADP(+) = (2S)-2-acetolactate + NADPH + H(+). The enzyme catalyses (2R,3R)-2,3-dihydroxy-3-methylpentanoate + NADP(+) = (S)-2-ethyl-2-hydroxy-3-oxobutanoate + NADPH + H(+). It functions in the pathway amino-acid biosynthesis; L-isoleucine biosynthesis; L-isoleucine from 2-oxobutanoate: step 2/4. It participates in amino-acid biosynthesis; L-valine biosynthesis; L-valine from pyruvate: step 2/4. Its function is as follows. Involved in the biosynthesis of branched-chain amino acids (BCAA). Catalyzes an alkyl-migration followed by a ketol-acid reduction of (S)-2-acetolactate (S2AL) to yield (R)-2,3-dihydroxy-isovalerate. In the isomerase reaction, S2AL is rearranged via a Mg-dependent methyl migration to produce 3-hydroxy-3-methyl-2-ketobutyrate (HMKB). In the reductase reaction, this 2-ketoacid undergoes a metal-dependent reduction by NADPH to yield (R)-2,3-dihydroxy-isovalerate. The protein is Ketol-acid reductoisomerase (NADP(+)) of Dechloromonas aromatica (strain RCB).